The following is a 194-amino-acid chain: Naphthalene 1,2-dioxygenase system, small oxygenase component (194 aa).

The protein belongs to the bacterial ring-hydroxylating dioxygenase beta subunit family. As to quaternary structure, the naphthalene dioxygenase (NDO) multicomponent enzyme system is composed of an electron transfer component and a dioxygenase component (iron sulfur protein (ISP)). The electron transfer component is composed of a ferredoxin reductase (NdoR) and a ferredoxin (NdoA), and the dioxygenase component is formed of a heterohexamer (trimer of heterodimers) of three large alpha subunits (NdoB) and three small beta subunits (NdoC).

The protein operates within aromatic compound metabolism; naphthalene degradation. Its function is as follows. Component of the naphthalene dioxygenase (NDO) multicomponent enzyme system which catalyzes the incorporation of both atoms of molecular oxygen into naphthalene to form cis-(1R,2S)-dihydroxy-1,2-dihydronaphthalene. The beta subunit seems to have a structural role in the holoenzyme. Also able to catalyze the cis-dihydroxylation of biphenyl and phenanthrene. The polypeptide is Naphthalene 1,2-dioxygenase system, small oxygenase component (Pseudomonas putida (Arthrobacter siderocapsulatus)).